Reading from the N-terminus, the 104-residue chain is L-rhamnose mutarotase (104 aa).

Residue Y18 participates in substrate binding. The Proton donor role is filled by H22. Residues Y41 and 76–77 (WW) each bind substrate.

This sequence belongs to the rhamnose mutarotase family. Homodimer.

It is found in the cytoplasm. The catalysed reaction is alpha-L-rhamnose = beta-L-rhamnose. The protein operates within carbohydrate metabolism; L-rhamnose metabolism. Involved in the anomeric conversion of L-rhamnose. This Acidiphilium cryptum (strain JF-5) protein is L-rhamnose mutarotase.